The sequence spans 226 residues: ATP synthase F(0) complex subunit a (226 aa).

Transmembrane regions (helical) follow at residues 14-34 (ILGI…FSAP), 68-88 (WTLM…LGLL), 97-117 (QLSM…LMGF), 138-158 (IPML…ALAV), 164-184 (ITAG…LSSI), and 193-213 (FTIL…QAYV).

It belongs to the ATPase A chain family. Component of the ATP synthase complex composed at least of ATP5F1A/subunit alpha, ATP5F1B/subunit beta, ATP5MC1/subunit c (homooctomer), MT-ATP6/subunit a, MT-ATP8/subunit 8, ATP5ME/subunit e, ATP5MF/subunit f, ATP5MG/subunit g, ATP5MK/subunit k, ATP5MJ/subunit j, ATP5F1C/subunit gamma, ATP5F1D/subunit delta, ATP5F1E/subunit epsilon, ATP5PF/subunit F6, ATP5PB/subunit b, ATP5PD/subunit d, ATP5PO/subunit OSCP. ATP synthase complex consists of a soluble F(1) head domain (subunits alpha(3) and beta(3)) - the catalytic core - and a membrane F(0) domain - the membrane proton channel (subunits c, a, 8, e, f, g, k and j). These two domains are linked by a central stalk (subunits gamma, delta, and epsilon) rotating inside the F1 region and a stationary peripheral stalk (subunits F6, b, d, and OSCP). Interacts with DNAJC30; interaction is direct.

The protein resides in the mitochondrion inner membrane. The enzyme catalyses H(+)(in) = H(+)(out). Its function is as follows. Subunit a, of the mitochondrial membrane ATP synthase complex (F(1)F(0) ATP synthase or Complex V) that produces ATP from ADP in the presence of a proton gradient across the membrane which is generated by electron transport complexes of the respiratory chain. ATP synthase complex consist of a soluble F(1) head domain - the catalytic core - and a membrane F(1) domain - the membrane proton channel. These two domains are linked by a central stalk rotating inside the F(1) region and a stationary peripheral stalk. During catalysis, ATP synthesis in the catalytic domain of F(1) is coupled via a rotary mechanism of the central stalk subunits to proton translocation. With the subunit c (ATP5MC1), forms the proton-conducting channel in the F(0) domain, that contains two crucial half-channels (inlet and outlet) that facilitate proton movement from the mitochondrial intermembrane space (IMS) into the matrix. Protons are taken up via the inlet half-channel and released through the outlet half-channel, following a Grotthuss mechanism. The chain is ATP synthase F(0) complex subunit a from Tachyglossus aculeatus aculeatus (Southeast Australian short-beaked echidna).